Reading from the N-terminus, the 361-residue chain is Queuine tRNA-ribosyltransferase (361 aa).

D92 (proton acceptor) is an active-site residue. Residues 92–96 (DSGGF), D146, Q189, and G216 contribute to the substrate site. Positions 247–253 (GVGKPAD) are RNA binding. D266 functions as the Nucleophile in the catalytic mechanism. Positions 271-275 (TRSGR) are RNA binding; important for wobble base 34 recognition. Zn(2+) is bound by residues C304, C306, C309, and H335.

This sequence belongs to the queuine tRNA-ribosyltransferase family. In terms of assembly, homodimer. Within each dimer, one monomer is responsible for RNA recognition and catalysis, while the other monomer binds to the replacement base PreQ1. Requires Zn(2+) as cofactor.

It carries out the reaction 7-aminomethyl-7-carbaguanine + guanosine(34) in tRNA = 7-aminomethyl-7-carbaguanosine(34) in tRNA + guanine. It participates in tRNA modification; tRNA-queuosine biosynthesis. Catalyzes the base-exchange of a guanine (G) residue with the queuine precursor 7-aminomethyl-7-deazaguanine (PreQ1) at position 34 (anticodon wobble position) in tRNAs with GU(N) anticodons (tRNA-Asp, -Asn, -His and -Tyr). Catalysis occurs through a double-displacement mechanism. The nucleophile active site attacks the C1' of nucleotide 34 to detach the guanine base from the RNA, forming a covalent enzyme-RNA intermediate. The proton acceptor active site deprotonates the incoming PreQ1, allowing a nucleophilic attack on the C1' of the ribose to form the product. After dissociation, two additional enzymatic reactions on the tRNA convert PreQ1 to queuine (Q), resulting in the hypermodified nucleoside queuosine (7-(((4,5-cis-dihydroxy-2-cyclopenten-1-yl)amino)methyl)-7-deazaguanosine). This chain is Queuine tRNA-ribosyltransferase, found in Rickettsia canadensis (strain McKiel).